We begin with the raw amino-acid sequence, 262 residues long: Nitrate transport protein NasD (262 aa).

The 235-residue stretch at 5–239 (IQVQGVSQRF…RPRNRVQLAD (235 aa)) folds into the ABC transporter domain. ATP is bound at residue 41-48 (GHSGCGKS).

The protein belongs to the ABC transporter superfamily.

It localises to the cell membrane. Functionally, probably part of a high-affinity binding-protein-dependent transport system for nitrate. Probably responsible for energy coupling to the transport system. In Klebsiella oxytoca, this protein is Nitrate transport protein NasD (nasD).